Here is a 328-residue protein sequence, read N- to C-terminus: RNA binding protein fox-1 homolog 3 (328 aa).

Pro residues predominate over residues 1 to 30 (MAQPYPPAQYPPPPQNGIPAEYAPPPPHPT). The disordered stretch occupies residues 1-106 (MAQPYPPAQY…QPKRLHVSNI (106 aa)). A compositionally biased stretch (polar residues) spans 49–87 (TPAQTHPEQPSSDTSTQPITGAQTVPQTDEAAQTDSQPL). The RRM domain occupies 99–172 (KRLHVSNIPF…NPVVGAVYGP (74 aa)). Arg192 carries the asymmetric dimethylarginine; alternate modification. At Arg192 the chain carries Omega-N-methylarginine; alternate. Arg288 bears the Asymmetric dimethylarginine mark.

The protein resides in the nucleus. The protein localises to the cytoplasm. Its function is as follows. Pre-mRNA alternative splicing regulator. Regulates alternative splicing of RBFOX2 to enhance the production of mRNA species that are targeted for nonsense-mediated decay (NMD). This is RNA binding protein fox-1 homolog 3 (RBFOX3) from Bos taurus (Bovine).